A 259-amino-acid chain; its full sequence is ATP synthase subunit a (259 aa).

The propeptide at 1 to 10 is removed in mature form; the sequence is MFNLLNTYIT. Transmembrane regions (helical) follow at residues 36–56, 92–112, 125–145, 150–170, 191–211, and 216–236; these read LTTF…LYTL, WGLY…ANLI, LVFI…LGLY, VFFS…LLVI, ILAG…FMLI, and LVFG…EFAI.

The protein belongs to the ATPase A chain family. As to quaternary structure, F-type ATPases have 2 components, CF(1) - the catalytic core - and CF(0) - the membrane proton channel. In yeast, the dimeric form of ATP synthase consists of 17 polypeptides: alpha, beta, gamma, delta, epsilon, 4 (B), 5 (OSCP), 6 (A), 8, 9 (C), d, E (Tim11), f, g, h, i/j and k.

The protein resides in the mitochondrion inner membrane. In terms of biological role, mitochondrial membrane ATP synthase (F(1)F(0) ATP synthase or Complex V) produces ATP from ADP in the presence of a proton gradient across the membrane which is generated by electron transport complexes of the respiratory chain. F-type ATPases consist of two structural domains, F(1) - containing the extramembraneous catalytic core and F(0) - containing the membrane proton channel, linked together by a central stalk and a peripheral stalk. During catalysis, ATP synthesis in the catalytic domain of F(1) is coupled via a rotary mechanism of the central stalk subunits to proton translocation. Key component of the proton channel; it may play a direct role in the translocation of protons across the membrane. The sequence is that of ATP synthase subunit a (ATP6) from Saccharomyces cerevisiae (strain ATCC 204508 / S288c) (Baker's yeast).